Consider the following 309-residue polypeptide: Aspartate carbamoyltransferase catalytic subunit (309 aa).

The carbamoyl phosphate site is built by R55 and T56. Position 85 (K85) interacts with L-aspartate. Carbamoyl phosphate-binding residues include R106, H135, and Q138. The L-aspartate site is built by R168 and R230. Carbamoyl phosphate is bound by residues L268 and P269.

This sequence belongs to the aspartate/ornithine carbamoyltransferase superfamily. ATCase family. In terms of assembly, heterododecamer (2C3:3R2) of six catalytic PyrB chains organized as two trimers (C3), and six regulatory PyrI chains organized as three dimers (R2).

The enzyme catalyses carbamoyl phosphate + L-aspartate = N-carbamoyl-L-aspartate + phosphate + H(+). The protein operates within pyrimidine metabolism; UMP biosynthesis via de novo pathway; (S)-dihydroorotate from bicarbonate: step 2/3. Catalyzes the condensation of carbamoyl phosphate and aspartate to form carbamoyl aspartate and inorganic phosphate, the committed step in the de novo pyrimidine nucleotide biosynthesis pathway. In Aliivibrio fischeri (strain ATCC 700601 / ES114) (Vibrio fischeri), this protein is Aspartate carbamoyltransferase catalytic subunit.